A 209-amino-acid chain; its full sequence is MGKVYVFDHPLIQHKLTYIRDKNTGTKEFRELVDEVATLMAFEITRDLPLEEVEIETPVSKARAKVIAGKKLGVIPILRAGIGMVDGILKLIPAAKVGHIGLYRDPQTLKPVEYYVKLPSDVEERDFIIVDPMLATGGSAVAAIDALKKRGAKSIKFMCLIAAPEGVKAVETAHPDVDIYIAALDERLNDHGYIVPGLGDAGDRLFGTK.

5-phospho-alpha-D-ribose 1-diphosphate-binding positions include arginine 79, arginine 104, and 131-139 (DPMLATGGS). Uracil is bound by residues isoleucine 194 and 199–201 (GDA). A 5-phospho-alpha-D-ribose 1-diphosphate-binding site is contributed by aspartate 200.

This sequence belongs to the UPRTase family. Requires Mg(2+) as cofactor.

It catalyses the reaction UMP + diphosphate = 5-phospho-alpha-D-ribose 1-diphosphate + uracil. It participates in pyrimidine metabolism; UMP biosynthesis via salvage pathway; UMP from uracil: step 1/1. Its activity is regulated as follows. Allosterically activated by GTP. In terms of biological role, catalyzes the conversion of uracil and 5-phospho-alpha-D-ribose 1-diphosphate (PRPP) to UMP and diphosphate. The chain is Uracil phosphoribosyltransferase from Geobacillus kaustophilus (strain HTA426).